The following is a 430-amino-acid chain: Asparagine--tRNA ligase (430 aa).

It belongs to the class-II aminoacyl-tRNA synthetase family. As to quaternary structure, homodimer.

It is found in the cytoplasm. The catalysed reaction is tRNA(Asn) + L-asparagine + ATP = L-asparaginyl-tRNA(Asn) + AMP + diphosphate + H(+). The protein is Asparagine--tRNA ligase of Pelotomaculum thermopropionicum (strain DSM 13744 / JCM 10971 / SI).